The following is a 1343-amino-acid chain: DNA-directed RNA polymerase subunit beta (1343 aa).

Belongs to the RNA polymerase beta chain family. The RNAP catalytic core consists of 2 alpha, 1 beta, 1 beta' and 1 omega subunit. When a sigma factor is associated with the core the holoenzyme is formed, which can initiate transcription.

It catalyses the reaction RNA(n) + a ribonucleoside 5'-triphosphate = RNA(n+1) + diphosphate. Its function is as follows. DNA-dependent RNA polymerase catalyzes the transcription of DNA into RNA using the four ribonucleoside triphosphates as substrates. The protein is DNA-directed RNA polymerase subunit beta of Haemophilus influenzae (strain PittGG).